The chain runs to 243 residues: ATP synthase subunit a (243 aa).

The next 8 membrane-spanning stretches (helical) occupy residues 28–48 (SSLY…AGVF), 52–72 (VIPG…LGII), 83–103 (YFPL…VGML), 114–134 (HIVV…LIGL), 141–161 (FFAM…MIFL), 177–197 (LTAN…FVYP), 200–220 (LLIS…EVFI), and 221–241 (AMLQ…DSLF).

This sequence belongs to the ATPase A chain family. F-type ATPases have 2 components, CF(1) - the catalytic core - and CF(0) - the membrane proton channel. CF(1) has five subunits: alpha(3), beta(3), gamma(1), delta(1), epsilon(1). CF(0) has three main subunits: a(1), b(2) and c(9-12). The alpha and beta chains form an alternating ring which encloses part of the gamma chain. CF(1) is attached to CF(0) by a central stalk formed by the gamma and epsilon chains, while a peripheral stalk is formed by the delta and b chains.

Its subcellular location is the cell inner membrane. Its function is as follows. Key component of the proton channel; it plays a direct role in the translocation of protons across the membrane. This chain is ATP synthase subunit a, found in Neorickettsia sennetsu (strain ATCC VR-367 / Miyayama) (Ehrlichia sennetsu).